Reading from the N-terminus, the 708-residue chain is Leukotoxin translocation ATP-binding protein LktB (708 aa).

A Peptidase C39 domain is found at 1–126 (MEANHQRNDL…ACYQGQLILV (126 aa)). An ABC transmembrane type-1 domain is found at 155–437 (FLETLIVSIF…LAQLWQDFQQ (283 aa)). The next 5 helical transmembrane spans lie at 159 to 179 (LIVS…FQVV), 192 to 212 (LNII…LSGL), 270 to 290 (ALTS…MWYY), 296 to 316 (LVIL…SPIL), and 389 to 409 (VMVI…LSIG). The region spanning 469-704 (ISFKNIRFRY…SNGLYSYLHQ (236 aa)) is the ABC transporter domain. 503-510 (GRSGSGKS) is an ATP binding site.

It belongs to the ABC transporter superfamily. Protein-1 exporter (TC 3.A.1.109) family. As to quaternary structure, homodimer.

It localises to the cell inner membrane. It catalyses the reaction ATP + H2O + proteinSide 1 = ADP + phosphate + proteinSide 2.. Functionally, part of the ABC transporter complex LktBD involved in leukotoxin export. Transmembrane domains (TMD) form a pore in the inner membrane and the ATP-binding domain (NBD) is responsible for energy generation. The polypeptide is Leukotoxin translocation ATP-binding protein LktB (lktB) (Mannheimia haemolytica (Pasteurella haemolytica)).